We begin with the raw amino-acid sequence, 461 residues long: Lysosomal proton-coupled steroid conjugate and bile acid symporter SLC46A3 (461 aa).

Positions 1–25 (MKIPFVEPVICLSVFAVTLNSPLTT) are cleaved as a signal peptide. Topologically, residues 26-70 (QYVYRRIWEETGNYSIALESNTSECAKNKSSPIFAFQEEVQKKVS) are extracellular. N38, N46, and N53 each carry an N-linked (GlcNAc...) asparagine glycan. A helical transmembrane segment spans residues 71–91 (LFNLEMDISGLIPGLVSTFVF). Residues 92-101 (LSHSDHGGRK) lie on the Cytoplasmic side of the membrane. Residues 102–124 (FPLILSSVGALANSAWLCLLSYF) traverse the membrane as a helical segment. Over 125-133 (ALPIQLLIA) the chain is Extracellular. Residues 134 to 156 (STFIGALFGNYTTFLGASFAYIV) traverse the membrane as a helical segment. Topologically, residues 157–170 (DQCKEKKQRTIRIA) are cytoplasmic. A helical transmembrane segment spans residues 171-191 (IIDFLFGVVSGLTGLSSGYFI). Topologically, residues 192–195 (RGLG) are extracellular. The helical transmembrane segment at 196-216 (FVWSFLIVTVALFVNLIYILL) threads the bilayer. Residues 217–261 (FLEDSMKESSSQNISVSWTETFKNLFHRTYMLFKNASGEQQSLCC) are Cytoplasmic-facing. The chain crosses the membrane as a helical span at residues 262–282 (LLLFTMITYFFVTIGVSPIFV). The Extracellular portion of the chain corresponds to 283 to 294 (LYELDSPLCWDE). A helical membrane pass occupies residues 295-315 (VLIGYGSALGSVTFFSSFLGI). Residues 316–324 (WLFSYCMED) are Cytoplasmic-facing. A helical membrane pass occupies residues 325–345 (IHMAFIGTFTTMVGMAMTAFA). The Extracellular portion of the chain corresponds to 346-347 (RT). A helical transmembrane segment spans residues 348-368 (TLMMFLVRLPFLFTVMPLSVL). Over 369–382 (RSMISKVVHSTEQG) the chain is Cytoplasmic. A helical transmembrane segment spans residues 383-403 (TMFACLAFLETLGGITAVSTF). Topologically, residues 404 to 415 (NGIYSATVAWCK) are extracellular. A helical membrane pass occupies residues 416–436 (GFVFLLSAVLLLIPAISLCVI). At 437-461 (KYVSRNTGSYVLLIQEESSEDTSDR) the chain is on the cytoplasmic side. The Tyrosine-based lysosomal-sorting motif motif lies at 446 to 449 (YVLL).

It belongs to the major facilitator superfamily. SLC46A family.

It localises to the lysosome membrane. It carries out the reaction estrone 3-sulfate(out) + n H(+)(out) = estrone 3-sulfate(in) + n H(+)(in). It catalyses the reaction 25-hydroxyvitamin D3 sulfate(out) + n H(+)(out) = 25-hydroxyvitamin D3 sulfate(in) + n H(+)(in). The enzyme catalyses cholate(out) + n H(+)(out) = cholate(in) + n H(+)(in). The catalysed reaction is glycocholate(out) + n H(+)(out) = glycocholate(in) + n H(+)(in). It carries out the reaction taurocholate(out) + n H(+)(out) = taurocholate(in) + n H(+)(in). It catalyses the reaction dehydroepiandrosterone 3-sulfate(out) + n H(+)(out) = dehydroepiandrosterone 3-sulfate(in) + n H(+)(in). The enzyme catalyses N-acetyl-D-muramoyl-L-alanyl-D-isoglutamine(out) + n H(+)(out) = N-acetyl-D-muramoyl-L-alanyl-D-isoglutamine(in) + n H(+)(in). The catalysed reaction is 2',3'-cGAMP(out) + n H(+)(out) = 2',3'-cGAMP(in) + n H(+)(in). Its function is as follows. Lysosomal proton-coupled steroid conjugate and bile acid transporter. Preferentially recognizes lipophilic steroid conjugates or bile acis as endogenous substrates and seems to mediate escape from lysosomes to the cytoplasm. Modulates hepatic cytosolic copper homeostasis, maybe acting as a lysosomal copper transporter and sequestering copper ions in the lysosome. Delivers pathogen-associated molecular patterns to cytosolic pattern recognition receptors as part of the innate immune response to microbes. Selectively transports bacterial muramyl dipeptide (MDP) into the cytosol for recognition by NOD2, triggering inflammatory responses. Likely acts as a redundant importer of cyclic GMP-AMP dinucleotides (cGAMPs) in monocyte and macrophage cell lineages. The transport mechanism, its electrogenicity and stoichiometry remain to be elucidated. The protein is Lysosomal proton-coupled steroid conjugate and bile acid symporter SLC46A3 (SLC46A3) of Bos taurus (Bovine).